A 483-amino-acid polypeptide reads, in one-letter code: Phosphomethylpyrimidine synthase (483 aa).

Substrate contacts are provided by residues Asn-97, Met-126, Tyr-156, His-192, 212-214 (SRG), 253-256 (DSLR), and Glu-292. Position 296 (His-296) interacts with Zn(2+). Tyr-319 lines the substrate pocket. His-360 is a binding site for Zn(2+). Residues Cys-440, Cys-443, and Cys-448 each contribute to the [4Fe-4S] cluster site.

This sequence belongs to the ThiC family. It depends on [4Fe-4S] cluster as a cofactor.

It catalyses the reaction 5-amino-1-(5-phospho-beta-D-ribosyl)imidazole + S-adenosyl-L-methionine = 4-amino-2-methyl-5-(phosphooxymethyl)pyrimidine + CO + 5'-deoxyadenosine + formate + L-methionine + 3 H(+). It functions in the pathway cofactor biosynthesis; thiamine diphosphate biosynthesis. Catalyzes the synthesis of the hydroxymethylpyrimidine phosphate (HMP-P) moiety of thiamine from aminoimidazole ribotide (AIR) in a radical S-adenosyl-L-methionine (SAM)-dependent reaction. The sequence is that of Phosphomethylpyrimidine synthase from Parasynechococcus marenigrum (strain WH8102).